We begin with the raw amino-acid sequence, 26 residues long: Omega-conotoxin CVIC (26 aa).

Intrachain disulfides connect C1/C16, C8/C20, and C15/C26. C26 carries the post-translational modification Cysteine amide.

It belongs to the conotoxin O1 superfamily. As to expression, expressed by the venom duct.

The protein resides in the secreted. Its function is as follows. Omega-conotoxins act at presynaptic membranes, they bind and block voltage-gated calcium channels (Cav). This toxin blocks N-, P- and Q-type calcium channels. The protein is Omega-conotoxin CVIC of Conus catus (Cat cone).